Here is a 100-residue protein sequence, read N- to C-terminus: Testis development-related protein 1 (100 aa).

Residues 73-100 form a disordered region; that stretch reads GLGSLGGQDSSGSLVQRASCELESPYEL.

In terms of tissue distribution, expressed in the testis but not in any other non-reproductive tissues (at protein level). Mainly located in spermatogenic cells in seminiferous tubules of adult testis.

The protein localises to the cytoplasm. In Homo sapiens (Human), this protein is Testis development-related protein 1 (TDRG1).